A 721-amino-acid chain; its full sequence is Catalase-peroxidase 1 (721 aa).

Residues 98-226 (WHAAGTYRIA…LAAVMMGLIY (129 aa)) constitute a cross-link (tryptophyl-tyrosyl-methioninium (Trp-Tyr) (with M-252)). H99 acts as the Proton acceptor in catalysis. The segment at residues 226–252 (YVNPEGVDGQPDPLKTAHDVRVTFARM) is a cross-link (tryptophyl-tyrosyl-methioninium (Tyr-Met) (with W-98)). H267 provides a ligand contact to heme b.

The protein belongs to the peroxidase family. Peroxidase/catalase subfamily. As to quaternary structure, homodimer or homotetramer. Heme b serves as cofactor. Post-translationally, formation of the three residue Trp-Tyr-Met cross-link is important for the catalase, but not the peroxidase activity of the enzyme.

The catalysed reaction is H2O2 + AH2 = A + 2 H2O. It carries out the reaction 2 H2O2 = O2 + 2 H2O. In terms of biological role, bifunctional enzyme with both catalase and broad-spectrum peroxidase activity. In Vibrio parahaemolyticus serotype O3:K6 (strain RIMD 2210633), this protein is Catalase-peroxidase 1.